A 568-amino-acid polypeptide reads, in one-letter code: Zinc finger protein 76 (568 aa).

Residue lysine 24 forms a Glycyl lysine isopeptide (Lys-Gly) (interchain with G-Cter in SUMO2) linkage. 3 tandem repeats follow at residues 34–45, 62–73, and 88–99. Residues 34–99 are 3 X 12 AA approximate repeats; it reads IQLEDGTTAY…LEDGSTAYIH (66 aa). 7 consecutive C2H2-type zinc fingers follow at residues 165 to 189, 195 to 219, 225 to 249, 255 to 279, 285 to 309, 315 to 339, and 345 to 368; these read FRCG…ERAH, YRCD…VRTH, YKCP…VRTH, FRCP…VRTH, YTCP…VRIH, YVCT…HVVH, and YTCS…RSAH. Positions 365–402 are disordered; the sequence is RSAHGELEATEESEQALYEQQQLEAASAAEESPPPKPT. Residues 379 to 395 show a composition bias toward low complexity; it reads QALYEQQQLEAASAAEE.

This sequence belongs to the krueppel C2H2-type zinc-finger protein family.

Its subcellular location is the nucleus. Its function is as follows. May be involved in transcriptional regulation. This is Zinc finger protein 76 (Znf76) from Mus musculus (Mouse).